Reading from the N-terminus, the 597-residue chain is Elongation factor 4 (597 aa).

A tr-type G domain is found at 2-184; that stretch reads KHIRNFSIIA…NIVSAIPAPE (183 aa). GTP is bound by residues 14 to 19 and 131 to 134; these read DHGKST and NKID.

This sequence belongs to the TRAFAC class translation factor GTPase superfamily. Classic translation factor GTPase family. LepA subfamily.

The protein localises to the cell inner membrane. It catalyses the reaction GTP + H2O = GDP + phosphate + H(+). Required for accurate and efficient protein synthesis under certain stress conditions. May act as a fidelity factor of the translation reaction, by catalyzing a one-codon backward translocation of tRNAs on improperly translocated ribosomes. Back-translocation proceeds from a post-translocation (POST) complex to a pre-translocation (PRE) complex, thus giving elongation factor G a second chance to translocate the tRNAs correctly. Binds to ribosomes in a GTP-dependent manner. The chain is Elongation factor 4 from Vibrio parahaemolyticus serotype O3:K6 (strain RIMD 2210633).